A 777-amino-acid chain; its full sequence is MNSLLRLSHLAGPAHYRALHSSSSIWSKVAISKFEPKSYLPYEKLSQTVKIVKDRLKRPLTLSEKILYGHLDQPKTQDIERGVSYLRLRPDRVAMQDATAQMAMLQFISSGLPKTAVPSTIHCDHLIEAQKGGAQDLARAKDLNKEVFNFLATAGSKYGVGFWKPGSGIIHQIILENYAFPGLLLIGTDSHTPNGGGLGGLCIGVGGADAVDVMADIPWELKCPKVIGIKLTGKLNGWTSAKDVILKVADILTVKGGTGAIVEYFGPGVDSISATGMGTICNMGAEIGATTSVFPYNESMYKYLEATGRKEIAEEARKYKDLLTADDGANYDQIIEINLDTLTPHVNGPFTPDLASSIDKLGENAKKNGWPLDVKVSLIGSCTNSSYEDMTRAASIAKQALDKGLKAKTIFTITPGSEQVRATIERDGLSKIFADFGGMVLANACGPCIGQWDRQDVKKGEKNTIVTSYNRNFTGRNDANPATHGFVTSPDITTAMAISGRLDFNPLTDELTAADGSKFKLQAPTGLDLPPKGYDPGEDTFQAPSGSGQVDVSPSSDRLQLLSPFDKWDGKDLEDMKILIKVTGKCTTDHISAAGPWLKYRGHLDNISNNLFLTAINADNGEMNKVKNQVTGEYGAVPATARKYKADGVRWVAIGDENYGEGSSREHAALEPRHLGGRAIIVKSFARIHETNLKKQGMLPLTFANPADYDKIDPSDNVSIVGLSSFAPGKPLTAIFKKTNGSKVEVTLNHTFNEQQIEWFKAGSALNRMKEVFAKSK.

Residues 1-26 constitute a mitochondrion transit peptide; that stretch reads MNSLLRLSHLAGPAHYRALHSSSSIW. Residues Gln-96 and 189-191 each bind substrate; that span reads DSH. Residues Cys-382, Cys-445, and Cys-448 each coordinate [4Fe-4S] cluster. Residues Arg-471 and Arg-476 each coordinate substrate. Positions 534 to 555 are disordered; sequence YDPGEDTFQAPSGSGQVDVSPS. Over residues 542–555 the composition is skewed to polar residues; sequence QAPSGSGQVDVSPS. Substrate-binding positions include Arg-601 and 664 to 665; that span reads SR.

Belongs to the aconitase/IPM isomerase family. Monomer. It depends on [4Fe-4S] cluster as a cofactor.

Its subcellular location is the mitochondrion. The catalysed reaction is citrate = D-threo-isocitrate. The protein operates within carbohydrate metabolism; tricarboxylic acid cycle; isocitrate from oxaloacetate: step 2/2. Catalyzes the isomerization of citrate to isocitrate via cis-aconitate. The chain is Probable aconitate hydratase, mitochondrial from Caenorhabditis elegans.